Here is an 862-residue protein sequence, read N- to C-terminus: MSRPDGISGDRYNVKETEARWQQAWEAKRCFEAEIAPGKPKYYVLEMFPYPSGRIHMGHVRNYTLGDVVARYKRAKGFNVLHPMGWDAFGLPAENAAIQNNVHPAKWTRENIAAMREQLKSMGLSYDWRREVATCEPEYYRHEQKMFLDFLKAGLVYRKESWVNWDPVENTVLANEQVIDGRGWRSGALVEKRLLSQWFLKITAYAQDLLDSLATLERWPERVRLMQENWIGRSEGARLMFDLDGRSDRLEIFTTRPDTLFGAKFVAIAANHPLAAELAAGNPALAEFVAECNRMGTSEAAIETAEKKGFDTGLRAVHPFDSTWTLPIYVANFVLMDYGSGAIFGCPAHDQRDLDFANKYGLGWTQVVEPASDGQAVLAAIAKGEAYTGDGVAVNSQFLDGLAVDEAKAEAIRRIEEMGRGERTINYRLRDWGVSRQRYWGCPIPVIHCEACGTVPVPAEQLPVVLPEDVSFDKPGNPLDHHPTWKHVDCPCCGKPARRETDTFDTFFESSWYFARYTSPDRTDVAFDRVAADYWMSVDQYIGGIEHAVLHLLYSRFFTRALKDCGYLNVKEPFAGLLTQGMICHETYKSEDGAWLFPTEVVPGADGKLVHAETGAPVTGGRSEKMSKSKKNVVDPAGIIDGYGADTARLFMLSDSPPERDLDWTEAGIDGAWRYVNRLWRMVATAELPPAGAPMPELSPEAAKIRRLLHKTIAQVGEDLERFHFNKAVARIREMTNGLGELPAGDSGAAWVLREGLEATARLIGPMMPHLAEEMWLALGGSGLLAEAAWPEADPALLVEDSVTVAVQVNGKLRATIELPKDVDAALAEQTALAQPQVISAMSGKPARKVVVVPNRIVNVVV.

Positions 49-59 (PYPSGRIHMGH) match the 'HIGH' region motif. The short motif at 625–629 (KMSKS) is the 'KMSKS' region element. An ATP-binding site is contributed by K628.

Belongs to the class-I aminoacyl-tRNA synthetase family.

It localises to the cytoplasm. The catalysed reaction is tRNA(Leu) + L-leucine + ATP = L-leucyl-tRNA(Leu) + AMP + diphosphate. This is Leucine--tRNA ligase from Paramagnetospirillum magneticum (strain ATCC 700264 / AMB-1) (Magnetospirillum magneticum).